We begin with the raw amino-acid sequence, 68 residues long: Amphipathic peptide VmCT1 (68 aa).

A signal peptide spans 1-23 (MKTQFVILIVAVVLLQLISHSEA). Phe36 is modified (phenylalanine amide). Residues 40–68 (GLRNFDDLDDTFEPEMSEADLKYLQDLLR) constitute a propeptide that is removed on maturation.

The protein belongs to the non-disulfide-bridged peptide (NDBP) superfamily. Short antimicrobial peptide (group 4) family. Expressed by the venom gland.

Its subcellular location is the secreted. It is found in the target cell membrane. Its function is as follows. Cationic amphipathic peptide with antibacterial activities against both Gram-positive and Gram-negative bacteria. Also shows antifungal activities. Is mildly hemolytic against human erythrocytes. In addition, when tested in vitro on the parasite Trypanosoma cruzi (responsible of the Chagas disease), is able to reduce the number of the three forms (epimastigote, trypomastigote and amastigote). Also shows antiplasmodial and cytotoxic activity (tested on Plasmodium gallinaceum, and MCF-7 breast cancer cell line). This Vaejovis mexicanus smithi (Mexican scorpion) protein is Amphipathic peptide VmCT1.